The following is a 1399-amino-acid chain: DNA-directed RNA polymerase subunit beta' (1399 aa).

Residues Cys70, Cys72, Cys85, and Cys88 each coordinate Zn(2+). Residues Asp460, Asp462, and Asp464 each coordinate Mg(2+). Cys814, Cys888, Cys895, and Cys898 together coordinate Zn(2+).

The protein belongs to the RNA polymerase beta' chain family. As to quaternary structure, the RNAP catalytic core consists of 2 alpha, 1 beta, 1 beta' and 1 omega subunit. When a sigma factor is associated with the core the holoenzyme is formed, which can initiate transcription. The cofactor is Mg(2+). Zn(2+) is required as a cofactor.

The catalysed reaction is RNA(n) + a ribonucleoside 5'-triphosphate = RNA(n+1) + diphosphate. Functionally, DNA-dependent RNA polymerase catalyzes the transcription of DNA into RNA using the four ribonucleoside triphosphates as substrates. The protein is DNA-directed RNA polymerase subunit beta' of Pseudomonas putida (strain ATCC 47054 / DSM 6125 / CFBP 8728 / NCIMB 11950 / KT2440).